We begin with the raw amino-acid sequence, 122 residues long: Large ribosomal subunit protein uL14c (122 aa).

Belongs to the universal ribosomal protein uL14 family. Part of the 50S ribosomal subunit.

It is found in the plastid. The protein localises to the chloroplast. Functionally, binds to 23S rRNA. The sequence is that of Large ribosomal subunit protein uL14c from Porphyra purpurea (Red seaweed).